Consider the following 626-residue polypeptide: ATP-dependent zinc metalloprotease FtsH (626 aa).

Residues 1–5 (MNFRN) are Cytoplasmic-facing. Residues 6-26 (LAIWLVIVAVLGGVFVVSQNS) form a helical membrane-spanning segment. Residues 27–98 (RTKSSSEISY…DVKFKSGSIS (72 aa)) are Periplasmic-facing. Residues 99 to 119 (FLAILVQLLPILLVVGVWLFL) traverse the membrane as a helical segment. Over 120 to 626 (MRQMQGGAKG…SPGAGASVTA (507 aa)) the chain is Cytoplasmic. 191–198 (GPPGTGKT) is an ATP binding site. Zn(2+) is bound at residue histidine 413. The active site involves glutamate 414. Residues histidine 417 and aspartate 491 each coordinate Zn(2+).

In the central section; belongs to the AAA ATPase family. This sequence in the C-terminal section; belongs to the peptidase M41 family. In terms of assembly, homohexamer. Requires Zn(2+) as cofactor.

Its subcellular location is the cell inner membrane. Functionally, acts as a processive, ATP-dependent zinc metallopeptidase for both cytoplasmic and membrane proteins. Plays a role in the quality control of integral membrane proteins. Its function is as follows. Absence of FtsH leads to increased sigma-32 levels, which suggests, in analogy to E.coli, that sigma-32 is a substrate for FtsH. May play a role in the general stress response, as overexpression leads to improved resistance to salt stress. The polypeptide is ATP-dependent zinc metalloprotease FtsH (Caulobacter vibrioides (strain NA1000 / CB15N) (Caulobacter crescentus)).